Consider the following 391-residue polypeptide: MTELYFCFHESIQKELSKFIVNENKNRDKNQTSKLMIDDNKIINFSTIDGVFNWGNIVIEFNDAIEYIGFLIKSNIHCRMKFHNGKTIGPDADCKCSKNYEDYLLVSVTNGKKKHILFFFRKLLPYLRTHDENINVKLGVSISLLFSKQISTNAIKYMFKISHLKDFCFLFNGLLQYRLISKKLIEYIMDSYQKKLTKHFVEDKIDDKDVAFLDFRKILANTIDNQKSTKLLQYVIDEFSNIANNIDRNDVKKKYRKSYDSLTENYVYDKKIINSLMEHCIYSESSSKFFNILTLDMGDYKNFTPDLVDIIMTHSTMKYTRIFFKNVLVSYPDEINKLFLNSLKYDCDVVDLLVEYGADYNKYGQQLLLEAKRRCKVLLANYLENLMDVTN.

Belongs to the mimivirus L17x/L18x family.

This is an uncharacterized protein from Acanthamoeba polyphaga (Amoeba).